Consider the following 238-residue polypeptide: uncharacterized protein (238 aa).

Transmembrane regions (helical) follow at residues 13–33 (TLFF…FGII), 40–60 (GSVG…LILG), 107–127 (VVLI…FCQV), and 140–160 (VISL…PMAF). 2 4Fe-4S ferredoxin-type domains span residues 178–208 (PFFQ…TEKL) and 204–233 (ITEK…FSYA). [4Fe-4S] cluster contacts are provided by cysteine 188, cysteine 191, cysteine 194, cysteine 198, cysteine 213, cysteine 216, cysteine 219, and cysteine 223.

Its subcellular location is the cell membrane. This is an uncharacterized protein from Methanocaldococcus jannaschii (strain ATCC 43067 / DSM 2661 / JAL-1 / JCM 10045 / NBRC 100440) (Methanococcus jannaschii).